Consider the following 138-residue polypeptide: ATP synthase epsilon chain (138 aa).

The protein belongs to the ATPase epsilon chain family. As to quaternary structure, F-type ATPases have 2 components, CF(1) - the catalytic core - and CF(0) - the membrane proton channel. CF(1) has five subunits: alpha(3), beta(3), gamma(1), delta(1), epsilon(1). CF(0) has three main subunits: a, b and c.

The protein localises to the cell membrane. In terms of biological role, produces ATP from ADP in the presence of a proton gradient across the membrane. The polypeptide is ATP synthase epsilon chain (Streptococcus suis (strain 98HAH33)).